A 678-amino-acid chain; its full sequence is Translation initiation factor eIF2B subunit epsilon (678 aa).

Phosphothreonine is present on Thr172. Residues 467–489 (STNELHLSDSESSETSSSSEEDM) are disordered. The residue at position 500 (Ser500) is a Phosphoserine. Thr503 bears the Phosphothreonine mark. At Ser506 the chain carries Phosphoserine. In terms of domain architecture, W2 spans 508-674 (DFDEGDFNKE…NTAESESESE (167 aa)).

Belongs to the eIF-2B gamma/epsilon subunits family. As to quaternary structure, component of the translation initiation factor 2B (eIF2B) complex which is a heterodecamer of two sets of five different subunits: alpha, beta, gamma, delta and epsilon. Subunits alpha, beta and delta comprise a regulatory subcomplex and subunits epsilon and gamma comprise a catalytic subcomplex. Within the complex, the hexameric regulatory complex resides at the center, with the two heterodimeric catalytic subcomplexes bound on opposite sides.

The protein localises to the cytoplasm. The protein resides in the cytosol. Acts as a component of the translation initiation factor 2B (eIF2B) complex, which catalyzes the exchange of GDP for GTP on the eukaryotic initiation factor 2 (eIF2) complex gamma subunit. Its guanine nucleotide exchange factor activity is repressed when bound to eIF2 complex phosphorylated on the alpha subunit, thereby limiting the amount of methionyl-initiator methionine tRNA available to the ribosome and consequently global translation is repressed. The protein is Translation initiation factor eIF2B subunit epsilon (tif225) of Schizosaccharomyces pombe (strain 972 / ATCC 24843) (Fission yeast).